Here is a 320-residue protein sequence, read N- to C-terminus: o-succinylbenzoate synthase (320 aa).

The Proton donor role is filled by lysine 133. The Mg(2+) site is built by aspartate 161, glutamate 190, and aspartate 213. The active-site Proton acceptor is the lysine 235.

It belongs to the mandelate racemase/muconate lactonizing enzyme family. MenC type 1 subfamily. It depends on a divalent metal cation as a cofactor.

The catalysed reaction is (1R,6R)-6-hydroxy-2-succinyl-cyclohexa-2,4-diene-1-carboxylate = 2-succinylbenzoate + H2O. The protein operates within quinol/quinone metabolism; 1,4-dihydroxy-2-naphthoate biosynthesis; 1,4-dihydroxy-2-naphthoate from chorismate: step 4/7. It participates in quinol/quinone metabolism; menaquinone biosynthesis. Its function is as follows. Converts 2-succinyl-6-hydroxy-2,4-cyclohexadiene-1-carboxylate (SHCHC) to 2-succinylbenzoate (OSB). The sequence is that of o-succinylbenzoate synthase from Escherichia coli O6:H1 (strain CFT073 / ATCC 700928 / UPEC).